Reading from the N-terminus, the 213-residue chain is Coiled-coil domain-containing protein 43 (213 aa).

Residues Arg119–Thr206 adopt a coiled-coil conformation. Residues Tyr127 to Arg213 form a disordered region. Residues Thr131 to Gln142 are compositionally biased toward acidic residues. Residues Gln169–Asp200 show a composition bias toward basic and acidic residues. Residues Lys201–Arg213 show a composition bias toward basic residues.

The protein belongs to the CCDC43 family.

In Danio rerio (Zebrafish), this protein is Coiled-coil domain-containing protein 43 (ccdc43).